The primary structure comprises 97 residues: Co-chaperonin GroES (97 aa).

The protein belongs to the GroES chaperonin family. As to quaternary structure, heptamer of 7 subunits arranged in a ring. Interacts with the chaperonin GroEL.

The protein resides in the cytoplasm. In terms of biological role, together with the chaperonin GroEL, plays an essential role in assisting protein folding. The GroEL-GroES system forms a nano-cage that allows encapsulation of the non-native substrate proteins and provides a physical environment optimized to promote and accelerate protein folding. GroES binds to the apical surface of the GroEL ring, thereby capping the opening of the GroEL channel. The protein is Co-chaperonin GroES of Wigglesworthia glossinidia brevipalpis.